The chain runs to 320 residues: UPF0053 protein in cps region (320 aa).

The helical transmembrane segment at 4 to 24 (CLSFLLMIGFSLIAEGFSFII) threads the bilayer. 2 consecutive CBS domains span residues 121 to 183 (MTSR…PLDL) and 186 to 244 (LVRQ…PNEV).

The protein belongs to the UPF0053 family.

Its subcellular location is the cell membrane. In Klebsiella pneumoniae, this protein is UPF0053 protein in cps region.